The primary structure comprises 184 residues: Large ribosomal subunit protein uL5 (184 aa).

The protein belongs to the universal ribosomal protein uL5 family. Part of the 50S ribosomal subunit; part of the 5S rRNA/L5/L18/L25 subcomplex. Contacts the 5S rRNA and the P site tRNA. Forms a bridge to the 30S subunit in the 70S ribosome.

This is one of the proteins that bind and probably mediate the attachment of the 5S RNA into the large ribosomal subunit, where it forms part of the central protuberance. In the 70S ribosome it contacts protein S13 of the 30S subunit (bridge B1b), connecting the 2 subunits; this bridge is implicated in subunit movement. Contacts the P site tRNA; the 5S rRNA and some of its associated proteins might help stabilize positioning of ribosome-bound tRNAs. This chain is Large ribosomal subunit protein uL5, found in Corynebacterium kroppenstedtii (strain DSM 44385 / JCM 11950 / CIP 105744 / CCUG 35717).